Reading from the N-terminus, the 637-residue chain is Biosynthetic arginine decarboxylase (637 aa).

Lys-101 is subject to N6-(pyridoxal phosphate)lysine. Position 286-296 (286-296 (FDVGGGLAVDY)) interacts with substrate.

The protein belongs to the Orn/Lys/Arg decarboxylase class-II family. SpeA subfamily. Requires Mg(2+) as cofactor. Pyridoxal 5'-phosphate is required as a cofactor.

The enzyme catalyses L-arginine + H(+) = agmatine + CO2. It functions in the pathway amine and polyamine biosynthesis; agmatine biosynthesis; agmatine from L-arginine: step 1/1. In terms of biological role, catalyzes the biosynthesis of agmatine from arginine. This chain is Biosynthetic arginine decarboxylase, found in Shewanella loihica (strain ATCC BAA-1088 / PV-4).